The primary structure comprises 356 residues: Methionine import ATP-binding protein MetN (356 aa).

An ABC transporter domain is found at 7 to 250 (IKLDNIDVTF…PRESLTQDFI (244 aa)). 43–50 (GYSGAGKS) contacts ATP.

Belongs to the ABC transporter superfamily. Methionine importer (TC 3.A.1.24) family. In terms of assembly, the complex is composed of two ATP-binding proteins (MetN), two transmembrane proteins (MetI) and a solute-binding protein (MetQ).

The protein resides in the cell membrane. It catalyses the reaction L-methionine(out) + ATP + H2O = L-methionine(in) + ADP + phosphate + H(+). The catalysed reaction is D-methionine(out) + ATP + H2O = D-methionine(in) + ADP + phosphate + H(+). Its function is as follows. Part of the ABC transporter complex MetNIQ involved in methionine import. Responsible for energy coupling to the transport system. The sequence is that of Methionine import ATP-binding protein MetN from Streptococcus agalactiae serotype III (strain NEM316).